The primary structure comprises 253 residues: Uracil-DNA glycosylase (253 aa).

Catalysis depends on aspartate 79, which acts as the Proton acceptor.

This sequence belongs to the uracil-DNA glycosylase (UDG) superfamily. UNG family.

It localises to the cytoplasm. It carries out the reaction Hydrolyzes single-stranded DNA or mismatched double-stranded DNA and polynucleotides, releasing free uracil.. Excises uracil residues from the DNA which can arise as a result of misincorporation of dUMP residues by DNA polymerase or due to deamination of cytosine. This Xylella fastidiosa (strain M12) protein is Uracil-DNA glycosylase.